The following is a 384-amino-acid chain: F-box protein At2g07140 (384 aa).

Residues 1-46 (MTLPELPKDLVEEILSFVPATSLKRLRSTCKGWNRLFKDDKRFTRI) form the F-box domain.

In Arabidopsis thaliana (Mouse-ear cress), this protein is F-box protein At2g07140.